The chain runs to 233 residues: Bcl-2-like protein 1 (233 aa).

Positions 4–24 match the BH4 motif; it reads SNRELVVDFLSYKLSQKGYSW. A disordered region spans residues 27–73; the sequence is FSDVEENRTEAPEETEPERETPSAINGNPSWHLADSPAVNGATGHSS. Residue serine 49 is modified to Phosphoserine; by PLK3. Serine 62 carries the post-translational modification Phosphoserine; by CDK1. The BH3 motif lies at 86-100; that stretch reads VKQALREAGDEFELR. Positions 129-148 match the BH1 motif; that stretch reads ELFRDGVNWGRIVAFFSFGG. Residues 180 to 195 carry the BH2 motif; the sequence is PWIQENGGWDTFVDLY. A helical membrane pass occupies residues 210–226; that stretch reads FNRWFLTGMTVAGVVLL.

This sequence belongs to the Bcl-2 family. Homodimer. Interacts with BCL2L11. Interacts with BAD. Interacts with PGAM5. Interacts with HEBP2. Interacts with p53/TP53 and BBC3; interaction with BBC3 disrupts the interaction with p53/TP53. Interacts with ATP5F1A and ATP5F1B; the interactions mediate the association of isoform Bcl-X(L) with the mitochondrial membrane ATP synthase F(1)F(0) ATP synthase. Interacts with VDAC1. Interacts with BCL2L11 (via BH3). Interacts with RNF183. Interacts with GIMAP3/IAN4 and GIMAP5/IAN5. Interacts with GIMAP5 and HSPA8/HSC70; the interaction between HSPA8 and BCL2L1 is impaired in the absence of GIMAP5. Interacts with isoform 4 of CLU; this interaction releases and activates BAX and promotes cell death. In terms of assembly, forms heterodimers with BAX, BAK or BCL2; heterodimerization with BAX does not seem to be required for anti-apoptotic activity. Interacts with isoform 1 of SIVA1; the interaction inhibits the anti-apoptotic activity. Interacts with IKZF3. Interacts with RTL10/BOP. Interacts with DNM1L and CLTA; DNM1L and BCL2L1 isoform BCL-X(L) may form a complex in synaptic vesicles that also contains clathrin and MFF. Interacts (via the loop between motifs BH4 and BH3) with NLRP1 (via LRR repeats), but not with NLRP2, NLRP3, NLRP4, PYCARD, nor MEFV. Interacts with BECN1. Proteolytically cleaved by caspases during apoptosis. The cleaved protein, lacking the BH4 motif, has pro-apoptotic activity. Post-translationally, phosphorylated on Ser-62 by CDK1. This phosphorylation is partial in normal mitotic cells, but complete in G2-arrested cells upon DNA-damage, thus promoting subsequent apoptosis probably by triggering caspases-mediated proteolysis. Phosphorylated by PLK3, leading to regulate the G2 checkpoint and progression to cytokinesis during mitosis. Phosphorylation at Ser-49 appears during the S phase and G2, disappears rapidly in early mitosis during prometaphase, metaphase and early anaphase, and re-appears during telophase and cytokinesis. In terms of processing, ubiquitinated by RNF183 during prolonged ER stress, leading to degradation by the proteosome. As to expression, expressed in most tissues. Bcl-X(beta) is specifically expressed in cerebellum, heart, and thymus. In the ovary, the predominant form is Bcl-X(L), with a small but detectable level of Bcl-X(S).

The protein localises to the mitochondrion inner membrane. Its subcellular location is the mitochondrion outer membrane. It is found in the mitochondrion matrix. It localises to the cytoplasmic vesicle. The protein resides in the secretory vesicle. The protein localises to the synaptic vesicle membrane. Its subcellular location is the cytoplasm. It is found in the cytosol. It localises to the cytoskeleton. The protein resides in the microtubule organizing center. The protein localises to the centrosome. Its subcellular location is the nucleus membrane. Its function is as follows. Potent inhibitor of cell death. Inhibits activation of caspases. Appears to regulate cell death by blocking the voltage-dependent anion channel (VDAC) by binding to it and preventing the release of the caspase activator, CYC1, from the mitochondrial membrane. Also acts as a regulator of G2 checkpoint and progression to cytokinesis during mitosis. Isoform Bcl-X(L) also regulates presynaptic plasticity, including neurotransmitter release and recovery, number of axonal mitochondria as well as size and number of synaptic vesicle clusters. During synaptic stimulation, increases ATP availability from mitochondria through regulation of mitochondrial membrane ATP synthase F(1)F(0) activity and regulates endocytic vesicle retrieval in hippocampal neurons through association with DMN1L and stimulation of its GTPase activity in synaptic vesicles. May attenuate inflammation impairing NLRP1-inflammasome activation, hence CASP1 activation and IL1B release. In terms of biological role, isoform Bcl-X(S) promotes apoptosis. The protein is Bcl-2-like protein 1 (Bcl2l1) of Rattus norvegicus (Rat).